We begin with the raw amino-acid sequence, 140 residues long: MTKRQNRMVLVALLVIGVSLAGYLGLKAFNENLLYFLSPTDVTKGRAPKDKDFRLGGMIVKDSIKHDGIKVVFDVTDYSNTFRVNYSGILPDLFKEGQGVITTGSLVDGVFMATEVLAKHDENYMPPEVADALEKAKNKQ.

Topologically, residues Met-1–Arg-7 are cytoplasmic. Residues Met-8–Ala-28 traverse the membrane as a helical; Signal-anchor for type II membrane protein segment. Over Phe-29–Gln-140 the chain is Periplasmic. Residues His-120 and Tyr-124 each coordinate heme.

The protein belongs to the CcmE/CycJ family.

The protein localises to the cell inner membrane. Its function is as follows. Heme chaperone required for the biogenesis of c-type cytochromes. Transiently binds heme delivered by CcmC and transfers the heme to apo-cytochromes in a process facilitated by CcmF and CcmH. The protein is Cytochrome c-type biogenesis protein CcmE of Vesicomyosocius okutanii subsp. Calyptogena okutanii (strain HA).